Here is a 142-residue protein sequence, read N- to C-terminus: MANGKYAARKLKQDRQKHRWSDSDYARRARGLGKKSDPLEGAPQGRGIVLEKVGIEAKQPNSAIRKCVRVQLIKNGKQVTAFCPGDGAISFIDEHDEVTIAGIGGAKGRAMGDLSGVNYKVEKVNGVSLIELVRGNAEKPVR.

The interval 1–44 (MANGKYAARKLKQDRQKHRWSDSDYARRARGLGKKSDPLEGAPQ) is disordered. Basic and acidic residues predominate over residues 11–27 (LKQDRQKHRWSDSDYAR).

This sequence belongs to the universal ribosomal protein uS12 family. As to quaternary structure, part of the 30S ribosomal subunit.

Its function is as follows. With S4 and S5 plays an important role in translational accuracy. Located at the interface of the 30S and 50S subunits. In Natronomonas pharaonis (strain ATCC 35678 / DSM 2160 / CIP 103997 / JCM 8858 / NBRC 14720 / NCIMB 2260 / Gabara) (Halobacterium pharaonis), this protein is Small ribosomal subunit protein uS12.